We begin with the raw amino-acid sequence, 102 residues long: Death-associated protein 1 (102 aa).

Positions 1-102 (MSSPPEGKLE…RTQHIQQPRK (102 aa)) are disordered. Ser-2 is modified (N-acetylserine). A Phosphoserine; by MTOR modification is found at Ser-3. The residue at position 29 (Lys-29) is an N6-acetyllysine. Over residues 32–43 (HTGDTKEEKDKD) the composition is skewed to basic and acidic residues. Position 49 is a phosphoserine (Ser-49). Ser-51 carries the phosphoserine; by MTOR modification. Ser-91 bears the Phosphoserine mark. The span at 92 to 102 (PRTQHIQQPRK) shows a compositional bias: polar residues.

The protein belongs to the DAP-DAPL1 family. In terms of assembly, associates with ribosomes; inhibiting translation. Interacts with eiF5a (EIF5A and EIF5A2); inhibiting translation. Post-translationally, phosphorylated. Phosphorylation by MTOR inhibits the suppressive activity of DAP toward autophagy.

Functionally, ribosome-binding protein involved in ribosome hibernation, a process during which ribosomes are stabilized in an inactive state and preserved from proteasomal degradation. Acts via its association with eiF5a (EIF5A and EIF5A2) at the polypeptide exit tunnel of the ribosome, preventing mRNA translation. Involved in ribosome hibernation in the mature oocyte by preventing mRNA translation, leading to ribosome inactivation. Ribosomes, which are produced in large quantities during oogenesis, are stored and translationally repressed in the oocyte and early embryo. Also acts as a negative regulator of autophagy. Involved in mediating interferon-gamma-induced cell death. This chain is Death-associated protein 1, found in Homo sapiens (Human).